The following is a 228-amino-acid chain: Caspase recruitment domain-containing protein 19 (228 aa).

C7 and C77 are joined by a disulfide. The CARD domain maps to 8–99 (DRLVQDTPFL…PLHSRLPSRH (92 aa)). V113 is subject to Phosphoserine.

As to quaternary structure, associates with BCL10 by CARD-CARD interaction. As to expression, expressed in ovary, testis, placenta, skeletal muscle, kidney, lung, heart and liver (at protein level). Expressed in thymus and brain.

The protein localises to the nucleus. Its subcellular location is the endoplasmic reticulum membrane. The protein resides in the mitochondrion membrane. Functionally, plays a role in inhibiting the effects of BCL10-induced activation of NF-kappa-B. May inhibit the phosphorylation of BCL10 in a CARD-dependent manner. This chain is Caspase recruitment domain-containing protein 19 (CARD19), found in Homo sapiens (Human).